The chain runs to 676 residues: Serine/threonine-protein kinase Haspin homolog ALK2 (676 aa).

The segment at 53–93 (HKGSAEDESQSFFTSSDSPTSKTRPVGKTIENDDYYGKRSS) is disordered. Polar residues predominate over residues 62-75 (QSFFTSSDSPTSKT). The short motif at 116–118 (KEN) is the KEN box element. The short motif at 150 to 158 (RTPLRPISN) is the D box element. Residues 228 to 312 (SSRSVNDQDP…HKTSHSSLNK (85 aa)) are disordered. The segment covering 232-259 (VNDQDPNFVQPKPTNSLQKKSSISSFHN) has biased composition (polar residues). One can recognise a Protein kinase domain in the interval 383–672 (LCDVKYILHD…TCGDLLSLKG (290 aa)). ATP is bound by residues 389–397 (ILHDLREAQ) and lysine 430.

The protein belongs to the protein kinase superfamily. Ser/Thr protein kinase family. Haspin subfamily. Post-translationally, periodically phosphorylated during the cell cycle with a phosphorylation peak during mitosis and hyperphosphorylated after DNA damage.

The catalysed reaction is L-seryl-[protein] + ATP = O-phospho-L-seryl-[protein] + ADP + H(+). It carries out the reaction L-threonyl-[protein] + ATP = O-phospho-L-threonyl-[protein] + ADP + H(+). Its function is as follows. Serine/threonine haspin-like protein kinase involved in cell cycle regulation. The protein is Serine/threonine-protein kinase Haspin homolog ALK2 (ALK2) of Saccharomyces cerevisiae (strain ATCC 204508 / S288c) (Baker's yeast).